The following is a 435-amino-acid chain: Ras association domain-containing protein 9 (435 aa).

The disordered stretch occupies residues 1-22; it reads MAPFGRNLLKTRHKNRSPTKDM. The Ras-associating domain occupies 25-119; the sequence is EEKEIVVWVC…MQFVLVKADA (95 aa). A coiled-coil region spans residues 195–290; the sequence is HTIHQQVKRM…DKLSAEIEKE (96 aa). The tract at residues 380–435 is disordered; the sequence is NRAKESEVPSSNGEIPPFTQRVFSNYTNDTDSDTGISSNHSQDSETTVGDVVLLST. Polar residues predominate over residues 400–426; sequence RVFSNYTNDTDSDTGISSNHSQDSETT.

In terms of assembly, interacts with PAM.

It localises to the endosome. In terms of biological role, may play a role in regulating vesicuar trafficking in cells. The chain is Ras association domain-containing protein 9 (RASSF9) from Homo sapiens (Human).